Reading from the N-terminus, the 574-residue chain is MSLLDLVLLLLVLGLGGVLLLRRKGEDRSAQEARELLEAARREAREVLEAARKEARDILEAARQEAKALRQEAEARAKAQREEVEAELRRRLEAAEAEAKKRLEEAGERLKAEREELRAERERLRSLQEELKEERERLKAEREELRREGERLAKRAEALDARAARLEEAEAELVRKEEALKAEARALEERLKEVERRLYEVAGLTPEEARRLVLERLDRELEEEKAQRVRAALERARLEARREAQKILAQAMQRQASETAAQLAVTVVPIPSDAMKGRIIGREGRNIRAFEALTGVDLIIDDTPDAVLLSSFNPIRREIARMALEELLKDGRIHPSRIEEVVEKAKQEMKTFIYERGEEAALEAGVVGLKPGLIQLLGRLHFRSSYGQNVLKHSIQVAHLAGIMAAELGLDAALARRAGLLHDIGKSVDREVEGSHVEIGIALARRFGEPKEVVDAIAHHHDPDNAETLYAVLVAAADALSAARPGARRESLEEYLQRLEALERIALSFPGVETAFAVQAGREVRVIVKPEKISDAKATLLAREIASRIEKEMNYPGQVQVTVVRETRAVEYAR.

A helical membrane pass occupies residues 1–21 (MSLLDLVLLLLVLGLGGVLLL). Residues 264–327 (AVTVVPIPSD…EIARMALEEL (64 aa)) form the KH domain. One can recognise an HD domain in the interval 390-483 (VLKHSIQVAH…VAAADALSAA (94 aa)).

It belongs to the RNase Y family.

It localises to the cell membrane. In terms of biological role, endoribonuclease that initiates mRNA decay. The chain is Ribonuclease Y from Thermus thermophilus (strain ATCC 27634 / DSM 579 / HB8).